Here is a 465-residue protein sequence, read N- to C-terminus: GTPase Der (465 aa).

EngA-type G domains follow at residues 3-166 and 184-358; these read FLVA…LNEY and IHFS…ACAS. Residues 9–16, 56–60, 118–121, 190–197, 237–241, and 302–305 each bind GTP; these read GRANVGKS, DTGGI, NKVD, GRPNVGKS, DTAGV, and NKWD. Positions 359–443 constitute a KH-like domain; it reads KKITTADATR…PIVFEFKQSE (85 aa). A disordered region spans residues 446-465; the sequence is FADRKNKRSKDEGSKSKKVK.

The protein belongs to the TRAFAC class TrmE-Era-EngA-EngB-Septin-like GTPase superfamily. EngA (Der) GTPase family. In terms of assembly, associates with the 50S ribosomal subunit.

Its function is as follows. GTPase that plays an essential role in the late steps of ribosome biogenesis. This chain is GTPase Der, found in Francisella tularensis subsp. tularensis (strain FSC 198).